The following is a 179-amino-acid chain: ATP synthase subunit delta (179 aa).

It belongs to the ATPase delta chain family. F-type ATPases have 2 components, F(1) - the catalytic core - and F(0) - the membrane proton channel. F(1) has five subunits: alpha(3), beta(3), gamma(1), delta(1), epsilon(1). F(0) has three main subunits: a(1), b(2) and c(10-14). The alpha and beta chains form an alternating ring which encloses part of the gamma chain. F(1) is attached to F(0) by a central stalk formed by the gamma and epsilon chains, while a peripheral stalk is formed by the delta and b chains.

It localises to the cell inner membrane. Its function is as follows. F(1)F(0) ATP synthase produces ATP from ADP in the presence of a proton or sodium gradient. F-type ATPases consist of two structural domains, F(1) containing the extramembraneous catalytic core and F(0) containing the membrane proton channel, linked together by a central stalk and a peripheral stalk. During catalysis, ATP synthesis in the catalytic domain of F(1) is coupled via a rotary mechanism of the central stalk subunits to proton translocation. In terms of biological role, this protein is part of the stalk that links CF(0) to CF(1). It either transmits conformational changes from CF(0) to CF(1) or is implicated in proton conduction. This chain is ATP synthase subunit delta, found in Paraburkholderia phytofirmans (strain DSM 17436 / LMG 22146 / PsJN) (Burkholderia phytofirmans).